A 111-amino-acid chain; its full sequence is uncharacterized protein (111 aa).

The next 2 membrane-spanning stretches (helical) occupy residues 7 to 29 (LYSS…RALY) and 49 to 71 (PSLL…SINL).

The protein localises to the membrane. This is an uncharacterized protein from Saccharomyces cerevisiae (strain ATCC 204508 / S288c) (Baker's yeast).